Reading from the N-terminus, the 456-residue chain is Short chain dehydrogenase tazN (456 aa).

V45, D99, N126, R160, Y195, K199, and T229 together coordinate NADP(+). Y195 acts as the Proton donor in catalysis. The active-site Lowers pKa of active site Tyr is the K199.

Belongs to the short-chain dehydrogenases/reductases (SDR) family.

Its pathway is secondary metabolite biosynthesis. Short chain dehydrogenase; part of the gene cluster that mediates the biosynthesis of azaterrilone A and other azaphilones, a class of fungal metabolites characterized by a highly oxygenated pyrano-quinone bicyclic core and exhibiting a broad range of bioactivities. The first step of the pathway begins with the non-reducing polyketide synthase tazA that assembles one acetyl-CoA starter unit, five malonyl-CoA units, and catalyzes a series of Claisen condensations, methylation, PT-mediated cyclization, and finally releases the first hexaketide precursor through the R-domain. The tazA product then undergoes reduction on its terminal ketone and the following pyran-ring formation by yet undetermined enzyme(s). Dehydration and enoyl reduction, possibly involving the trans-enoyl reductase tazE leads to the next intermediate. TazD is predicted as an acetyltransferase and might catalyze the acetylation steps leading to the synthesis of azaterrilone A. Azaterrilone A is not the final product of the taz pathway and both the highly reducing polyketide synthase tazB and the dual enzyme tazHJ catalyze late steps of the pathway, leading to the production of the 2 final stereoisomers that contain additional polyketide modification whose structures have still to be determined. This is Short chain dehydrogenase tazN from Aspergillus terreus (strain NIH 2624 / FGSC A1156).